The sequence spans 463 residues: MDAPEQSFLREKSLAVEDQELAVGTLEDSHAAKPETNAAIELPNKSKPEKSAVEKDREDFREAVVKTLDRLLFVHKSFDIYHGVAGLYDFGPHGRTVELNILSLWRKCFVDEEDMMEVACTALTPEAVFNASGHVKKFTDLMVKDEVDGAFHRADHLVKSYCENRKKDPTISAENAAELDKVIAHVEDLSAEELGGVWNHCSTAPVTKNPLSHPPRPFNLMFQTSFGASGSLIGYLRPETAQGSFCNFKDYYNLNGRKLPFAVAQVGRVFRNEISPRQGLLRTREFTLAEIEHFVHPEHKSHSKFSDVAKLELLMFPREEQEKPGQFAKRLCLGEAVAKGHVNSETLGFFIGRVYLFLIRLGIDKERLRFRHHLANEMAHYATDCWDAEIECSYGWIECVGIADRSDYDLRAHSEKSGHALVAQEKLAEPIEVEKLAITPEMKELGPAFKGNQKNVVEALEVD.

Residues 25-54 (TLEDSHAAKPETNAAIELPNKSKPEKSAVE) form a disordered region. Residues 44–54 (NKSKPEKSAVE) show a composition bias toward basic and acidic residues. Substrate is bound by residues arginine 153 and glutamate 239. ATP-binding positions include 271 to 273 (RNE) and 281 to 286 (LRTREF). Substrate-binding positions include 286–290 (FTLAE) and asparagine 376. 398–399 (EC) contacts ATP.

It belongs to the class-II aminoacyl-tRNA synthetase family. As to quaternary structure, homodimer.

It is found in the cytoplasm. It carries out the reaction tRNA(Gly) + glycine + ATP = glycyl-tRNA(Gly) + AMP + diphosphate. Functionally, catalyzes the attachment of glycine to tRNA(Gly). Is also able produce diadenosine tetraphosphate (Ap4A), a universal pleiotropic signaling molecule needed for cell regulation pathways, by direct condensation of 2 ATPs. The chain is Putative glycine--tRNA ligase, cytoplasmic from Arabidopsis thaliana (Mouse-ear cress).